Here is a 213-residue protein sequence, read N- to C-terminus: Large ribosomal subunit protein uL1 (213 aa).

Belongs to the universal ribosomal protein uL1 family. As to quaternary structure, part of the 50S ribosomal subunit.

Functionally, binds directly to 23S rRNA. Probably involved in E site tRNA release. Protein L1 is also a translational repressor protein, it controls the translation of its operon by binding to its mRNA. The chain is Large ribosomal subunit protein uL1 from Methanocorpusculum labreanum (strain ATCC 43576 / DSM 4855 / Z).